A 919-amino-acid polypeptide reads, in one-letter code: Transcriptional regulatory protein EDS1 (919 aa).

The disordered stretch occupies residues methionine 1–arginine 54. Polar residues predominate over residues serine 23–arginine 36. The segment covering asparagine 37–threonine 46 has biased composition (basic and acidic residues). A DNA-binding region (zn(2)-C6 fungal-type) is located at residues cysteine 56–cysteine 85. The segment at alanine 297 to serine 338 is disordered. Residues leucine 304 to serine 317 show a composition bias toward basic and acidic residues. The segment covering threonine 318–serine 338 has biased composition (polar residues).

As to quaternary structure, binds DNA in a sequence-specific manner.

The protein localises to the nucleus. In Saccharomyces cerevisiae (strain Lalvin EC1118 / Prise de mousse) (Baker's yeast), this protein is Transcriptional regulatory protein EDS1 (EDS1).